Here is a 179-residue protein sequence, read N- to C-terminus: Pyridoxal 5'-phosphate synthase subunit PdxT (179 aa).

Residue 48 to 50 coordinates L-glutamine; sequence GES. Cysteine 79 acts as the Nucleophile in catalysis. L-glutamine contacts are provided by residues arginine 101 and 127–128; that span reads IR. Residues histidine 163 and glutamate 165 each act as charge relay system in the active site.

Belongs to the glutaminase PdxT/SNO family. In the presence of PdxS, forms a dodecamer of heterodimers. Only shows activity in the heterodimer.

The catalysed reaction is aldehydo-D-ribose 5-phosphate + D-glyceraldehyde 3-phosphate + L-glutamine = pyridoxal 5'-phosphate + L-glutamate + phosphate + 3 H2O + H(+). The enzyme catalyses L-glutamine + H2O = L-glutamate + NH4(+). It functions in the pathway cofactor biosynthesis; pyridoxal 5'-phosphate biosynthesis. In terms of biological role, catalyzes the hydrolysis of glutamine to glutamate and ammonia as part of the biosynthesis of pyridoxal 5'-phosphate. The resulting ammonia molecule is channeled to the active site of PdxS. The sequence is that of Pyridoxal 5'-phosphate synthase subunit PdxT from Francisella tularensis subsp. novicida (strain U112).